The sequence spans 122 residues: Small ribosomal subunit protein uS13 (122 aa).

A disordered region spans residues 99-122 (RGQRTHTNARTRKGPAKAIAGKKK).

It belongs to the universal ribosomal protein uS13 family. As to quaternary structure, part of the 30S ribosomal subunit. Forms a loose heterodimer with protein S19. Forms two bridges to the 50S subunit in the 70S ribosome.

In terms of biological role, located at the top of the head of the 30S subunit, it contacts several helices of the 16S rRNA. In the 70S ribosome it contacts the 23S rRNA (bridge B1a) and protein L5 of the 50S subunit (bridge B1b), connecting the 2 subunits; these bridges are implicated in subunit movement. Contacts the tRNAs in the A and P-sites. This is Small ribosomal subunit protein uS13 from Rhizobium leguminosarum bv. trifolii (strain WSM2304).